A 123-amino-acid chain; its full sequence is Large ribosomal subunit protein uL29 (123 aa).

It belongs to the universal ribosomal protein uL29 family. As to quaternary structure, component of the large ribosomal subunit.

Its subcellular location is the cytoplasm. Functionally, component of the large ribosomal subunit. The ribosome is a large ribonucleoprotein complex responsible for the synthesis of proteins in the cell. The polypeptide is Large ribosomal subunit protein uL29 (rpl35) (Ictalurus punctatus (Channel catfish)).